The chain runs to 504 residues: Maturase K (504 aa).

This sequence belongs to the intron maturase 2 family. MatK subfamily.

It is found in the plastid. It localises to the chloroplast. Its function is as follows. Usually encoded in the trnK tRNA gene intron. Probably assists in splicing its own and other chloroplast group II introns. The sequence is that of Maturase K from Nepenthes gracilis (Slender pitcher plant).